Reading from the N-terminus, the 246-residue chain is MSQEREPFSPRPEGPEQVTSTEESLLVPLPHGKCEKENMDLEDTTLYRNKSIQTDIEDRSILEDNSNSQPIKAQPQRLPQPNTSALEQSEEETGKIQNGHVGLSNINGIHNGVKHVPADHRNISAPVSQKMHRKIQSSLSVSSDGSKKSKESSAYSQKPSASPEDGCVHCILTCLFCEFLTLCNIVVGQASCGICTSEACCCCCTEEMGDDCNCPCDMDCGIMDACCESSDCLEICMECCGICFPS.

Disordered stretches follow at residues 1-93 and 134-164; these read MSQE…EEET and KIQS…ASPE. Topologically, residues 1 to 170 are extracellular; sequence MSQEREPFSP…ASPEDGCVHC (170 aa). Residues 63–87 show a composition bias toward polar residues; sequence EDNSNSQPIKAQPQRLPQPNTSALE. The 173-residue stretch at 74–246 folds into the MDFI domain; it reads QPQRLPQPNT…MECCGICFPS (173 aa). A helical transmembrane segment spans residues 171 to 188; it reads ILTCLFCEFLTLCNIVVG. The Cytoplasmic segment spans residues 189–246; that stretch reads QASCGICTSEACCCCCTEEMGDDCNCPCDMDCGIMDACCESSDCLEICMECCGICFPS.

The protein belongs to the MDFI family. As to expression, expressed broadly at a low level in the early embryo.

The protein resides in the cytoplasm. The protein localises to the cell membrane. It is found in the secreted. Functionally, required to control the activity of various transcription factors through their sequestration in the cytoplasm. Retains nuclear Zic proteins in the cytoplasm and inhibits their transcriptional activation. Required for dorsoanterior development. Necessary for siamois to activate downstream target genes, including gsc, during execution of the dorsal organizer program. Also regulates the transcriptional activity of TCF7L1/TCF3 by interacting directly with TCF7L1/TCF3 and preventing it from binding DNA. Involved in the development of lymphatic vessel valves. It is required to promote lymphatic endothelial cell migration, in a process that involves down-regulation of integrin beta 1 activation and control of cell adhesion to the extracellular matrix. The protein is MyoD family inhibitor domain-containing protein of Xenopus laevis (African clawed frog).